The chain runs to 88 residues: Ribonuclease P protein component 1 (88 aa).

Belongs to the eukaryotic/archaeal RNase P protein component 1 family. As to quaternary structure, consists of a catalytic RNA component and at least 4-5 protein subunits.

It is found in the cytoplasm. It carries out the reaction Endonucleolytic cleavage of RNA, removing 5'-extranucleotides from tRNA precursor.. Its function is as follows. Part of ribonuclease P, a protein complex that generates mature tRNA molecules by cleaving their 5'-ends. This is Ribonuclease P protein component 1 from Nitrosopumilus maritimus (strain SCM1).